A 112-amino-acid chain; its full sequence is Pediocin PA-1 immunity protein (112 aa).

Its function is as follows. Imparts immunity to pediocin PA-1/ACH to naturally sensitive host strains. This chain is Pediocin PA-1 immunity protein (pedB), found in Pediococcus acidilactici.